The following is a 1335-amino-acid chain: Phospholipid-transporting ATPase IK (1335 aa).

At 1 to 74 (MDGVHLGENL…LYEQFHRMSN (74 aa)) the chain is on the cytoplasmic side. A helical membrane pass occupies residues 75–95 (LYFLFIIILQGIPEISTLPWF). The Exoplasmic loop segment spans residues 96–295 (TLFAPLVCLF…LDLMMNKLVA (200 aa)). Residues 296 to 316 (LIFLSLVIASLLLTVGFTFMV) form a helical membrane-spanning segment. Over 317–339 (KQFKAKHYYMSPTHGRSDAMESF) the chain is Cytoplasmic. Residues 340–360 (FIFWGFLILLSVMVPMAMFII) traverse the membrane as a helical segment. Residues 361-917 (AEFIYLGNSI…YMRVCKFLRY (557 aa)) are Exoplasmic loop-facing. D407 serves as the catalytic 4-aspartylphosphate intermediate. ATP is bound by residues D407, K408, T409, E504, F545, K568, R601, T681, G682, D683, R831, and K837. D407 is a binding site for Mg(2+). T409 serves as a coordination point for Mg(2+). D857 is a Mg(2+) binding site. N860 and D861 together coordinate ATP. D861 contacts Mg(2+). The helical transmembrane segment at 918 to 938 (FFYKTVASMMAQIWFSLVNGF) threads the bilayer. At 939–946 (SAQPLYEG) the chain is on the cytoplasmic side. A helical transmembrane segment spans residues 947–967 (WFLALFNLLYSTLPVLYIGLF). The Exoplasmic loop portion of the chain corresponds to 968–995 (EQDVTAEKSLKMPELYMAGQKGELFNYS). The helical transmembrane segment at 996–1016 (IFMQAITHGTITSMINFFVTV) threads the bilayer. Over 1017–1033 (MVSSDMSKAGSSHDYQS) the chain is Cytoplasmic. The chain crosses the membrane as a helical span at residues 1034 to 1054 (LGVLVAISSLLSVTLEVMLVV). Position 1055 (K1055) is a topological domain, exoplasmic loop. A helical membrane pass occupies residues 1056-1076 (YWTLLFVGAVVLSLSSYVLMT). Topologically, residues 1077-1104 (SLTQSLWMYRISPKTFPFLFADYNVLFE) are cytoplasmic. Residues 1105–1125 (PCSLLLIVLNVALNVLPMLAL) traverse the membrane as a helical segment. Topologically, residues 1126–1335 (RTIHRTVLKQ…SQLEVPRKQS (210 aa)) are exoplasmic loop. Disordered stretches follow at residues 1192–1215 (VDDSDGGTVCESLNPPEEDIPLQN), 1236–1280 (FGKG…GKLL), and 1314–1335 (SPLWRDSASSSPSQLEVPRKQS). Polar residues-rich tracts occupy residues 1246 to 1255 (PNTSSQTMEK) and 1266 to 1276 (QKLPTTTSATS).

The protein belongs to the cation transport ATPase (P-type) (TC 3.A.3) family. Type IV subfamily. It depends on Mg(2+) as a cofactor. Expressed in testis, specifically in spermatids within seminiferous tubules (at protein level).

It is found in the cytoplasmic vesicle. It localises to the secretory vesicle. The protein localises to the acrosome membrane. Its subcellular location is the endoplasmic reticulum membrane. It carries out the reaction ATP + H2O + phospholipidSide 1 = ADP + phosphate + phospholipidSide 2.. The catalysed reaction is a 1,2-diacyl-sn-glycero-3-phospho-L-serine(out) + ATP + H2O = a 1,2-diacyl-sn-glycero-3-phospho-L-serine(in) + ADP + phosphate + H(+). P4-ATPase flippase which catalyzes the hydrolysis of ATP coupled to the transport of aminophospholipids from the outer to the inner leaflet of various membranes and ensures the maintenance of asymmetric distribution of phospholipids. Phospholipid translocation also seems to be implicated in vesicle formation and in uptake of lipid signaling molecules. May be responsible for the maintenance of asymmetric distribution of phosphatidylserine (PS) in spermatozoa membranes. Involved in acrosome reactions and binding of spermatozoa to zona pellucida. The polypeptide is Phospholipid-transporting ATPase IK (Mus musculus (Mouse)).